We begin with the raw amino-acid sequence, 155 residues long: Transcriptional repressor NrdR (155 aa).

Over residues 1 to 10 (MQCPHCHHNS) the composition is skewed to basic residues. The segment at 1 to 21 (MQCPHCHHNSSRVVDSRPTDG) is disordered. A zinc finger lies at 3-34 (CPHCHHNSSRVVDSRPTDGGRAIRRRRECENC). In terms of domain architecture, ATP-cone spans 49–139 (LLVIKKNGTR…VYRQFKDMSV (91 aa)).

The protein belongs to the NrdR family. The cofactor is Zn(2+).

In terms of biological role, negatively regulates transcription of bacterial ribonucleotide reductase nrd genes and operons by binding to NrdR-boxes. The polypeptide is Transcriptional repressor NrdR (Lacticaseibacillus casei (strain BL23) (Lactobacillus casei)).